A 430-amino-acid polypeptide reads, in one-letter code: Asparagine--tRNA ligase (430 aa).

It belongs to the class-II aminoacyl-tRNA synthetase family. In terms of assembly, homodimer.

It is found in the cytoplasm. It carries out the reaction tRNA(Asn) + L-asparagine + ATP = L-asparaginyl-tRNA(Asn) + AMP + diphosphate + H(+). The chain is Asparagine--tRNA ligase from Shouchella clausii (strain KSM-K16) (Alkalihalobacillus clausii).